The primary structure comprises 352 residues: Histidine biosynthesis bifunctional protein HisB (352 aa).

A histidinol-phosphatase region spans residues 1 to 164; it reads MSQKILFIDR…EIENEILSSF (164 aa). Catalysis depends on Asp-9, which acts as the Nucleophile. Mg(2+) is bound by residues Asp-9 and Asp-11. Asp-11 functions as the Proton donor in the catalytic mechanism. Positions 93, 95, 101, and 103 each coordinate Zn(2+). Position 130 (Asp-130) interacts with Mg(2+). Residues 165 to 352 form an imidazoleglycerol-phosphate dehydratase region; the sequence is RSASYQRTTK…ENLASSKGVI (188 aa).

This sequence in the N-terminal section; belongs to the histidinol-phosphatase family. The protein in the C-terminal section; belongs to the imidazoleglycerol-phosphate dehydratase family. Mg(2+) is required as a cofactor. The cofactor is Zn(2+).

Its subcellular location is the cytoplasm. The catalysed reaction is D-erythro-1-(imidazol-4-yl)glycerol 3-phosphate = 3-(imidazol-4-yl)-2-oxopropyl phosphate + H2O. The enzyme catalyses L-histidinol phosphate + H2O = L-histidinol + phosphate. Its pathway is amino-acid biosynthesis; L-histidine biosynthesis; L-histidine from 5-phospho-alpha-D-ribose 1-diphosphate: step 6/9. It participates in amino-acid biosynthesis; L-histidine biosynthesis; L-histidine from 5-phospho-alpha-D-ribose 1-diphosphate: step 8/9. In Campylobacter jejuni subsp. jejuni serotype O:23/36 (strain 81-176), this protein is Histidine biosynthesis bifunctional protein HisB.